The following is a 302-amino-acid chain: Oligopeptide transport system permease protein OppC (302 aa).

The Cytoplasmic portion of the chain corresponds to 1–39 (MMLSKKNSETLENFSEKLEVEGRSLWQDARRRFMHNRAA). Residues 40–62 (VASLIVLFLIALFVTVAPMLSQF) traverse the membrane as a helical segment. Topologically, residues 63–102 (TYFDTDWGMMSSAPDMASGHYFGTDSSGRDLLVRVAIGGR) are periplasmic. An ABC transmembrane type-1 domain is found at 101–290 (GRISLMVGIA…VTLFCFNFIG (190 aa)). A helical transmembrane segment spans residues 103–125 (ISLMVGIAAALVAVIVGTLYGSL). The Cytoplasmic segment spans residues 126 to 137 (SGYLGGKIDSVM). A helical membrane pass occupies residues 138–160 (MRLLEILNSFPFMFFVILLVTFF). Over 161-163 (GQN) the chain is Periplasmic. The helical transmembrane segment at 164–183 (ILLIFVAIGMVSWLDMARIV) threads the bilayer. Residues 184–213 (RGQTLSLKRKEFIEAAQVGGVSTASIVIRH) lie on the Cytoplasmic side of the membrane. The helical transmembrane segment at 214 to 236 (IVPNVLGVVVVYASLLVPSMILF) threads the bilayer. The Periplasmic portion of the chain corresponds to 237–267 (ESFLSFLGLGTQEPLSSWGALLSDGANSMEV). The chain crosses the membrane as a helical span at residues 268-290 (SPWLLLFPAGFLVVTLFCFNFIG). Residues 291–302 (DGLRDALDPKDR) are Cytoplasmic-facing.

It belongs to the binding-protein-dependent transport system permease family. OppBC subfamily. As to quaternary structure, the complex is composed of two ATP-binding proteins (OppD and OppF), two transmembrane proteins (OppB and OppC) and a solute-binding protein (OppA).

It is found in the cell inner membrane. Part of the ABC transporter complex OppABCDF involved in the uptake of oligopeptides, including the cell wall murein tripeptide L-alanyl-gamma-D-glutamyl-meso-diaminopimelate. Responsible for the translocation of the substrate across the membrane. Plays an important nutritional role and is involved in the recycling of cell wall peptides. The sequence is that of Oligopeptide transport system permease protein OppC from Salmonella typhimurium (strain LT2 / SGSC1412 / ATCC 700720).